Consider the following 173-residue polypeptide: Secreted RxLR effector protein RXLR-C12 (173 aa).

An N-terminal signal peptide occupies residues 1-18 (MLQFATAFLAISANVVMT). The short motif at 41-55 (RRLRTHEIGTVPEER) is the RxLR-dEER element. N-linked (GlcNAc...) asparagine glycosylation is present at Asn155.

It belongs to the RxLR effector family.

The protein resides in the secreted. The protein localises to the host cytoplasm. It localises to the host nucleus. Its function is as follows. Secreted effector that suppresses pattern-triggered immunity (PTI) in plant host. The polypeptide is Secreted RxLR effector protein RXLR-C12 (Plasmopara halstedii (Downy mildew of sunflower)).